Consider the following 234-residue polypeptide: Zinc finger FYVE domain-containing protein 21 (234 aa).

The FYVE-type zinc finger occupies 44–104; sequence DKECPRCMQC…QCADCALVSH (61 aa). Cysteine 50, cysteine 53, cysteine 66, cysteine 69, cysteine 74, cysteine 77, cysteine 96, and cysteine 99 together coordinate Zn(2+). The interval 107–234 is PH-like; the sequence is AEFYDKQLKV…TKLLYESRDQ (128 aa).

As to quaternary structure, interacts with PTK2/FAK1.

It localises to the cell junction. The protein resides in the focal adhesion. The protein localises to the cytoplasmic vesicle. It is found in the endosome. Its function is as follows. Plays a role in cell adhesion, and thereby in cell motility which requires repeated formation and disassembly of focal adhesions. Regulates microtubule-induced PTK2/FAK1 dephosphorylation, an event important for focal adhesion disassembly, as well as integrin beta-1/ITGB1 cell surface expression. This is Zinc finger FYVE domain-containing protein 21 (Zfyve21) from Rattus norvegicus (Rat).